A 209-amino-acid polypeptide reads, in one-letter code: METSKTAAESGVSFEIIFVGRSNVGKSSLLRELFGAKVRVGKRPGVTLRPAHVQVSDLLITDMPGFGFMSGVKDRKQDIVKDKTVHYIEENAERIKLGVLVIDSPAFPQIVDRWDSKDQIPIDVEMFDFLREVGIDTIIAANKMDKVKESEYGSLLDEIAIRLGLESPWQNWKHIIAPISAKKGDIKALKGLLRDRLHEMKRDDLFKYV.

The region spanning Val-12 to Asp-203 is the EngB-type G domain. GTP-binding positions include Gly-20–Ser-27, Gly-45–Arg-49, Asp-62–Gly-65, Asn-142–Asp-145, and Ile-179–Ala-181. Ser-27 and Thr-47 together coordinate Mg(2+).

It belongs to the TRAFAC class TrmE-Era-EngA-EngB-Septin-like GTPase superfamily. EngB GTPase family. Mg(2+) is required as a cofactor.

Functionally, necessary for normal cell division and for the maintenance of normal septation. This is Probable GTP-binding protein EngB from Methanosarcina barkeri (strain Fusaro / DSM 804).